Consider the following 457-residue polypeptide: UDP-N-acetylmuramate--L-alanine ligase (457 aa).

109–115 (GTDGKTT) lines the ATP pocket.

The protein belongs to the MurCDEF family.

It is found in the cytoplasm. The catalysed reaction is UDP-N-acetyl-alpha-D-muramate + L-alanine + ATP = UDP-N-acetyl-alpha-D-muramoyl-L-alanine + ADP + phosphate + H(+). It participates in cell wall biogenesis; peptidoglycan biosynthesis. Cell wall formation. The sequence is that of UDP-N-acetylmuramate--L-alanine ligase from Thermotoga neapolitana (strain ATCC 49049 / DSM 4359 / NBRC 107923 / NS-E).